The following is a 505-amino-acid chain: Transcription factor APG (505 aa).

Disordered stretches follow at residues 1-40 (MLRG…CSAA), 61-99 (GAAN…DTAP), 119-156 (PAAA…SGGG), 169-242 (PLQQ…APTT), 256-312 (AQRL…SQDE), 324-344 (RRSA…NLSE), and 469-505 (PPPP…VKQA). Residues 23–33 (PLRPPPPPPFQ) show a composition bias toward pro residues. Positions 131 to 144 (CSSSHGAVVPSTSA) are enriched in polar residues. A compositionally biased stretch (low complexity) spans 174–199 (PSGGETASASASAAATSTVPVESTVV). A compositionally biased stretch (polar residues) spans 200 to 212 (QAATNRLRSTPLF). Over residues 222-239 (PPKPSPRAAAPPPPPPLA) the composition is skewed to pro residues. Residues 288-299 (GDRRQLNWRDSH) show a composition bias toward basic and acidic residues. A compositionally biased stretch (polar residues) spans 300–310 (NNQSAEWSASQ). A compositionally biased stretch (basic residues) spans 324–334 (RRSAARSSKRS). Residues 335 to 344 (RTAEVHNLSE) show a composition bias toward basic and acidic residues. Residues 335-384 (RTAEVHNLSERRRRDRINEKMRALQELIPNCNKIDKASMLEEAIEYLKTL) enclose the bHLH domain. Over residues 492–505 (GAADAGNAPAVKQA) the composition is skewed to low complexity.

Belongs to the bHLH protein family. As to quaternary structure, homodimer and heterodimer with ILI5 or ILI6.

It localises to the nucleus. Functionally, atypical bHLH transcription factor that acts as a negative regulator of grain size. Binds the transcription factor ILI6 and forms a heterodimer of antagonistic bHLH transcription factors that regulates grain length and weight by controlling cell elongation in lemma and palea. May be involved in the control of lamina inclination through brassinosteroid signaling pathway. This Oryza sativa subsp. japonica (Rice) protein is Transcription factor APG (APG).